Reading from the N-terminus, the 437-residue chain is Adenylyltransferase and sulfurtransferase MOCS3 (437 aa).

Residues Gly82, Asp103, 110 to 114, Lys127, and 171 to 172 each bind ATP; these read TNLHR and DN. Zn(2+) is bound by residues Cys212 and Cys215. The active-site Glycyl thioester intermediate; for adenylyltransferase activity is the Cys229. The Zn(2+) site is built by Cys287 and Cys290. The Rhodanese domain occupies 337 to 435; it reads SNVPHLLVDV…WTHNIDPEFP (99 aa). The active-site Cysteine persulfide intermediate; for sulfurtransferase activity is the Cys391.

In the N-terminal section; belongs to the HesA/MoeB/ThiF family. UBA4 subfamily. Requires Zn(2+) as cofactor.

The protein resides in the cytoplasm. It localises to the cytosol. The enzyme catalyses [molybdopterin-synthase sulfur-carrier protein]-C-terminal Gly-Gly + ATP + H(+) = [molybdopterin-synthase sulfur-carrier protein]-C-terminal Gly-Gly-AMP + diphosphate. The catalysed reaction is [molybdopterin-synthase sulfur-carrier protein]-C-terminal Gly-Gly-AMP + S-sulfanyl-L-cysteinyl-[cysteine desulfurase] + AH2 = [molybdopterin-synthase sulfur-carrier protein]-C-terminal-Gly-aminoethanethioate + L-cysteinyl-[cysteine desulfurase] + A + AMP + 2 H(+). It participates in tRNA modification; 5-methoxycarbonylmethyl-2-thiouridine-tRNA biosynthesis. Its pathway is cofactor biosynthesis; molybdopterin biosynthesis. Its function is as follows. Plays a central role in 2-thiolation of mcm(5)S(2)U at tRNA wobble positions of cytosolic tRNA(Lys), tRNA(Glu) and tRNA(Gln). Also essential during biosynthesis of the molybdenum cofactor. Acts by mediating the C-terminal thiocarboxylation of sulfur carriers URM1 and MOCS2A. Its N-terminus first activates URM1 and MOCS2A as acyl-adenylates (-COAMP), then the persulfide sulfur on the catalytic cysteine is transferred to URM1 and MOCS2A to form thiocarboxylation (-COSH) of their C-terminus. The reaction probably involves hydrogen sulfide that is generated from the persulfide intermediate and that acts as a nucleophile towards URM1 and MOCS2A. Subsequently, a transient disulfide bond is formed. Does not use thiosulfate as sulfur donor; NFS1 probably acting as a sulfur donor for thiocarboxylation reactions. This is Adenylyltransferase and sulfurtransferase MOCS3 from Aedes aegypti (Yellowfever mosquito).